A 364-amino-acid polypeptide reads, in one-letter code: Phosphoserine aminotransferase (364 aa).

Position 46 (Arg46) interacts with L-glutamate. Residues 80–81 (AR), Trp106, Thr157, Asp176, and Gln199 contribute to the pyridoxal 5'-phosphate site. Position 200 is an N6-(pyridoxal phosphate)lysine (Lys200). A pyridoxal 5'-phosphate-binding site is contributed by 241–242 (NT).

It belongs to the class-V pyridoxal-phosphate-dependent aminotransferase family. SerC subfamily. Homodimer. Pyridoxal 5'-phosphate is required as a cofactor.

It is found in the cytoplasm. The catalysed reaction is O-phospho-L-serine + 2-oxoglutarate = 3-phosphooxypyruvate + L-glutamate. It catalyses the reaction 4-(phosphooxy)-L-threonine + 2-oxoglutarate = (R)-3-hydroxy-2-oxo-4-phosphooxybutanoate + L-glutamate. It functions in the pathway amino-acid biosynthesis; L-serine biosynthesis; L-serine from 3-phospho-D-glycerate: step 2/3. Its pathway is cofactor biosynthesis; pyridoxine 5'-phosphate biosynthesis; pyridoxine 5'-phosphate from D-erythrose 4-phosphate: step 3/5. Its function is as follows. Catalyzes the reversible conversion of 3-phosphohydroxypyruvate to phosphoserine and of 3-hydroxy-2-oxo-4-phosphonooxybutanoate to phosphohydroxythreonine. This Vibrio cholerae serotype O1 (strain ATCC 39315 / El Tor Inaba N16961) protein is Phosphoserine aminotransferase.